The sequence spans 404 residues: Phosphopentomutase (404 aa).

Residues aspartate 10, aspartate 303, histidine 308, aspartate 344, histidine 345, and histidine 356 each contribute to the Mn(2+) site.

This sequence belongs to the phosphopentomutase family. The cofactor is Mn(2+).

It is found in the cytoplasm. It carries out the reaction 2-deoxy-alpha-D-ribose 1-phosphate = 2-deoxy-D-ribose 5-phosphate. The catalysed reaction is alpha-D-ribose 1-phosphate = D-ribose 5-phosphate. It functions in the pathway carbohydrate degradation; 2-deoxy-D-ribose 1-phosphate degradation; D-glyceraldehyde 3-phosphate and acetaldehyde from 2-deoxy-alpha-D-ribose 1-phosphate: step 1/2. Functionally, isomerase that catalyzes the conversion of deoxy-ribose 1-phosphate (dRib-1-P) and ribose 1-phosphate (Rib-1-P) to deoxy-ribose 5-phosphate (dRib-5-P) and ribose 5-phosphate (Rib-5-P), respectively. The sequence is that of Phosphopentomutase from Shewanella oneidensis (strain ATCC 700550 / JCM 31522 / CIP 106686 / LMG 19005 / NCIMB 14063 / MR-1).